Reading from the N-terminus, the 83-residue chain is Large ribosomal subunit protein eL43 (83 aa).

Zn(2+) contacts are provided by Cys-38, Cys-41, Cys-56, and Cys-59. The C4-type zinc finger occupies 38–59 (CPVCGRKAVKRISTGIWQCQKC).

Belongs to the eukaryotic ribosomal protein eL43 family. Putative zinc-binding subfamily. Part of the 50S ribosomal subunit. The cofactor is Zn(2+).

Its function is as follows. Binds to the 23S rRNA. The protein is Large ribosomal subunit protein eL43 of Pyrococcus furiosus (strain ATCC 43587 / DSM 3638 / JCM 8422 / Vc1).